Here is a 129-residue protein sequence, read N- to C-terminus: Glutaredoxin-like protein ECU08_1380 (129 aa).

In terms of domain architecture, Glutaredoxin spans 26–126; sequence EADYGEMVRR…PLLTQNREPV (101 aa).

Belongs to the glutaredoxin family.

It localises to the cytoplasm. In terms of biological role, has a glutathione-disulfide oxidoreductase activity in the presence of NADPH and glutathione reductase. Reduces low molecular weight disulfides and proteins. This Encephalitozoon cuniculi (strain GB-M1) (Microsporidian parasite) protein is Glutaredoxin-like protein ECU08_1380.